The following is a 207-amino-acid chain: Ribonuclease HII (207 aa).

Residues 12–201 enclose the RNase H type-2 domain; it reads DLVAGVDEVG…VRAAWEAREG (190 aa). Asp-18, Glu-19, and Asp-110 together coordinate a divalent metal cation.

This sequence belongs to the RNase HII family. Requires Mn(2+) as cofactor. It depends on Mg(2+) as a cofactor.

It is found in the cytoplasm. The enzyme catalyses Endonucleolytic cleavage to 5'-phosphomonoester.. Its function is as follows. Endonuclease that specifically degrades the RNA of RNA-DNA hybrids. This Pseudomonas putida (strain GB-1) protein is Ribonuclease HII.